A 156-amino-acid chain; its full sequence is ATP synthase subunit b (156 aa).

A helical transmembrane segment spans residues 7–29 (LLGQAISFLLFVWFCMKFVWPPL).

It belongs to the ATPase B chain family. As to quaternary structure, F-type ATPases have 2 components, F(1) - the catalytic core - and F(0) - the membrane proton channel. F(1) has five subunits: alpha(3), beta(3), gamma(1), delta(1), epsilon(1). F(0) has three main subunits: a(1), b(2) and c(10-14). The alpha and beta chains form an alternating ring which encloses part of the gamma chain. F(1) is attached to F(0) by a central stalk formed by the gamma and epsilon chains, while a peripheral stalk is formed by the delta and b chains.

The protein localises to the cell inner membrane. Functionally, f(1)F(0) ATP synthase produces ATP from ADP in the presence of a proton or sodium gradient. F-type ATPases consist of two structural domains, F(1) containing the extramembraneous catalytic core and F(0) containing the membrane proton channel, linked together by a central stalk and a peripheral stalk. During catalysis, ATP synthesis in the catalytic domain of F(1) is coupled via a rotary mechanism of the central stalk subunits to proton translocation. Component of the F(0) channel, it forms part of the peripheral stalk, linking F(1) to F(0). This is ATP synthase subunit b from Shewanella halifaxensis (strain HAW-EB4).